We begin with the raw amino-acid sequence, 294 residues long: MKTKIIVIVGPTAVGKTALAIEVAKRFNGEVVSGDSQQVYRGLDIGTAKASPEEQAAVPHHLIDVREITESYSAFDFVSEAKMTIEDIHSRGKLAIIAGGTGLYIQSLLEGYHLGGETPHEEILAYRASLEPYSDEELAHLVEQAGLEIPQFNRRRAMRALEIAHFGQDLENQEILYEPLIICLDDERSQLYERINHRVDLMFEAGLLDEAKWLFDHSPNVQAAKGIGYKELFPYFRGEQTFEEARESLKQATRRFAKRQLTWFRNRMQVTFYQIGESGVQDRILSQIEEFLDD.

10–17 is an ATP binding site; that stretch reads GPTAVGKT. 12–17 contacts substrate; it reads TAVGKT. Residues 35-38 form an interaction with substrate tRNA region; the sequence is DSQQ.

The protein belongs to the IPP transferase family. As to quaternary structure, monomer. The cofactor is Mg(2+).

The enzyme catalyses adenosine(37) in tRNA + dimethylallyl diphosphate = N(6)-dimethylallyladenosine(37) in tRNA + diphosphate. Its function is as follows. Catalyzes the transfer of a dimethylallyl group onto the adenine at position 37 in tRNAs that read codons beginning with uridine, leading to the formation of N6-(dimethylallyl)adenosine (i(6)A). The chain is tRNA dimethylallyltransferase from Streptococcus pneumoniae serotype 2 (strain D39 / NCTC 7466).